The following is a 397-amino-acid chain: Alpha-2B adrenergic receptor (397 aa).

The chain crosses the membrane as a helical span at residues 1 to 25 (AIAAIIIFLILFTIFGNALVILAVL). Topologically, residues 26–36 (TSRSLRAPQNL) are cytoplasmic. The chain crosses the membrane as a helical span at residues 37–62 (FLVSLAAADILVATLIIPFSLANELL). Residues 63–72 (GYWYFRRMWC) lie on the Extracellular side of the membrane. A disulfide bridge links Cys72 with Cys151. Residues 73-95 (KVYLALDVLFCTSSIVHLCAISL) traverse the membrane as a helical segment. The Cytoplasmic portion of the chain corresponds to 96-117 (DRYWAVSRALEYNSKRTPRRIK). The helical transmembrane segment at 118–140 (CIILMVWLIAAVISLPSLVYKGD) threads the bilayer. Topologically, residues 141 to 156 (QGPQPSGAPQCNLNQE) are extracellular. Residues 157–180 (TWYILASSIGSFFAPCLIMILVYL) traverse the membrane as a helical segment. Residues 181-361 (RIYLIAKRSH…LSREKRFTFV (181 aa)) lie on the Cytoplasmic side of the membrane. Disordered regions lie at residues 193-212 (GPRAKGAPGKSKFKQSRQVP) and 230-319 (AAGE…LQQP). The segment covering 280-300 (SLEEEAEEEEEGEEEREEECE) has biased composition (acidic residues). Positions 301-319 (PQALPASPASACSPPLQQP) are enriched in low complexity. A helical transmembrane segment spans residues 362-385 (LAVVIGVFVLCWFPFFFSYSLGAI). Over 386 to 394 (CPQQCKVPH) the chain is Extracellular. A helical membrane pass occupies residues 395–397 (DLF).

This sequence belongs to the G-protein coupled receptor 1 family. Adrenergic receptor subfamily. ADRA2B sub-subfamily. Interacts with RAB26. Interacts with PPP1R9B.

Its subcellular location is the cell membrane. In terms of biological role, alpha-2 adrenergic receptors mediate the catecholamine-induced inhibition of adenylate cyclase through the action of G proteins. The sequence is that of Alpha-2B adrenergic receptor (ADRA2B) from Talpa europaea (European mole).